Consider the following 166-residue polypeptide: MISDESDRFNPRDPKPADAGKPSKSAKRREARQLATQALYQWHMARQSLNEIEAQFRVDNDFTDVDGAYFREILHGVPQFKTEIDNALTPCLDLAIEELDPVELAVLRLSTWELLKRVDVPYRVVINEGIELAKVFGSTDGHKFVNGVLDKLAPRLREAEVKAFKR.

The span at 1 to 18 (MISDESDRFNPRDPKPAD) shows a compositional bias: basic and acidic residues. A disordered region spans residues 1–30 (MISDESDRFNPRDPKPADAGKPSKSAKRRE).

Belongs to the NusB family.

Functionally, involved in transcription antitermination. Required for transcription of ribosomal RNA (rRNA) genes. Binds specifically to the boxA antiterminator sequence of the ribosomal RNA (rrn) operons. This Pseudomonas fluorescens (strain Pf0-1) protein is Transcription antitermination protein NusB.